A 241-amino-acid polypeptide reads, in one-letter code: Ribulose-phosphate 3-epimerase 1 (241 aa).

Residue Ser-21 coordinates substrate. His-46, Asp-48, and His-79 together coordinate a divalent metal cation. Asp-48 functions as the Proton acceptor in the catalytic mechanism. Substrate contacts are provided by residues His-79, 155–158 (GFGG), 192–194 (DGG), and 214–215 (GS). Asp-192 is an a divalent metal cation binding site. The active-site Proton donor is Asp-192.

It belongs to the ribulose-phosphate 3-epimerase family. A divalent metal cation serves as cofactor.

The catalysed reaction is D-ribulose 5-phosphate = D-xylulose 5-phosphate. The protein operates within carbohydrate degradation. In terms of biological role, catalyzes the reversible epimerization of D-ribulose 5-phosphate to D-xylulose 5-phosphate. In Cupriavidus necator (strain ATCC 17699 / DSM 428 / KCTC 22496 / NCIMB 10442 / H16 / Stanier 337) (Ralstonia eutropha), this protein is Ribulose-phosphate 3-epimerase 1.